Here is a 289-residue protein sequence, read N- to C-terminus: MEMNSPHEKAVQAIRYGHSCAMRLKRRLNHPMADGGPLSSYDLAKSIVESFSNAISILSAKPETEDDQFSDLSSRDSSPPPQGSPSKKRKIDSTNSSENWRDDSPDPIYYDGYLWRKYGQKSIKKSNHQRSYYRCSYNKDHNCEARKHEQKIKDNPPVYRTTYFGHHTCKTEHNLDAIFIAGQDPLDDFKSTQMIRFGKDQDQEKESRSNGFSLSVKHEEDIIKEQAIDQYREITSNDQDCQDVIEEYLSSPSGSYPPSSSSGSESADFNSDLLFDNPDSWDRYDQFYF.

A disordered region spans residues 62-103 (PETEDDQFSDLSSRDSSPPPQGSPSKKRKIDSTNSSENWRDD). Residues 104 to 172 (SPDPIYYDGY…YFGHHTCKTE (69 aa)) constitute a DNA-binding region (WRKY). Over residues 249 to 266 (LSSPSGSYPPSSSSGSES) the composition is skewed to low complexity. The disordered stretch occupies residues 249–278 (LSSPSGSYPPSSSSGSESADFNSDLLFDNP).

Belongs to the WRKY group III family.

The protein resides in the nucleus. Functionally, transcription factor. Interacts specifically with the W box (5'-(T)TGAC[CT]-3'), a frequently occurring elicitor-responsive cis-acting element. This Arabidopsis thaliana (Mouse-ear cress) protein is Probable WRKY transcription factor 38 (WRKY38).